The sequence spans 80 residues: uncharacterized protein (80 aa).

This is an uncharacterized protein from Acidianus sp. F28 (AFV-2).